A 314-amino-acid polypeptide reads, in one-letter code: Lipoyl synthase (314 aa).

[4Fe-4S] cluster-binding residues include Cys-61, Cys-66, Cys-72, Cys-87, Cys-91, Cys-94, and Ser-301. Residues 73–290 enclose the Radical SAM core domain; that stretch reads FGRGTATFMI…ERIATNLGFS (218 aa).

Belongs to the radical SAM superfamily. Lipoyl synthase family. Requires [4Fe-4S] cluster as cofactor.

It localises to the cytoplasm. The catalysed reaction is [[Fe-S] cluster scaffold protein carrying a second [4Fe-4S](2+) cluster] + N(6)-octanoyl-L-lysyl-[protein] + 2 oxidized [2Fe-2S]-[ferredoxin] + 2 S-adenosyl-L-methionine + 4 H(+) = [[Fe-S] cluster scaffold protein] + N(6)-[(R)-dihydrolipoyl]-L-lysyl-[protein] + 4 Fe(3+) + 2 hydrogen sulfide + 2 5'-deoxyadenosine + 2 L-methionine + 2 reduced [2Fe-2S]-[ferredoxin]. The protein operates within protein modification; protein lipoylation via endogenous pathway; protein N(6)-(lipoyl)lysine from octanoyl-[acyl-carrier-protein]: step 2/2. Its function is as follows. Catalyzes the radical-mediated insertion of two sulfur atoms into the C-6 and C-8 positions of the octanoyl moiety bound to the lipoyl domains of lipoate-dependent enzymes, thereby converting the octanoylated domains into lipoylated derivatives. The sequence is that of Lipoyl synthase from Nitrosomonas eutropha (strain DSM 101675 / C91 / Nm57).